Consider the following 342-residue polypeptide: GTPase Obg (342 aa).

The Obg domain maps to 1-159; the sequence is MKFLDEAKVY…HWLWLRLKLI (159 aa). In terms of domain architecture, OBG-type G spans 160-327; it reads ADAGLVGLPN…ALRALMAAMD (168 aa). GTP contacts are provided by residues 166–173, 191–195, 212–215, 279–282, and 308–310; these read GLPNAGKS, FTTLH, DIPG, SKAD, and SAA. Residues S173 and T193 each coordinate Mg(2+).

The protein belongs to the TRAFAC class OBG-HflX-like GTPase superfamily. OBG GTPase family. In terms of assembly, monomer. It depends on Mg(2+) as a cofactor.

Its subcellular location is the cytoplasm. In terms of biological role, an essential GTPase which binds GTP, GDP and possibly (p)ppGpp with moderate affinity, with high nucleotide exchange rates and a fairly low GTP hydrolysis rate. Plays a role in control of the cell cycle, stress response, ribosome biogenesis and in those bacteria that undergo differentiation, in morphogenesis control. This Methylobacterium nodulans (strain LMG 21967 / CNCM I-2342 / ORS 2060) protein is GTPase Obg.